A 525-amino-acid polypeptide reads, in one-letter code: GMP synthase [glutamine-hydrolyzing] (525 aa).

Residues 8 to 207 (KILILDFGSQ…ALEICACAAN (200 aa)) enclose the Glutamine amidotransferase type-1 domain. The active-site Nucleophile is the C85. Catalysis depends on residues H181 and E183. Residues 208 to 400 (WKPASIIEDA…LGLPYNMLYR (193 aa)) form the GMPS ATP-PPase domain. 235-241 (SGGVDSS) provides a ligand contact to ATP.

In terms of assembly, homodimer.

It catalyses the reaction XMP + L-glutamine + ATP + H2O = GMP + L-glutamate + AMP + diphosphate + 2 H(+). The protein operates within purine metabolism; GMP biosynthesis; GMP from XMP (L-Gln route): step 1/1. Functionally, catalyzes the synthesis of GMP from XMP. The protein is GMP synthase [glutamine-hydrolyzing] of Shewanella halifaxensis (strain HAW-EB4).